The chain runs to 513 residues: Xylose import ATP-binding protein XylG (513 aa).

2 ABC transporter domains span residues 5 to 242 and 259 to 505; these read LEMK…VGRE and LRIE…LRSE. 37–44 contacts ATP; the sequence is GENGSGKS.

This sequence belongs to the ABC transporter superfamily. Xylose importer (TC 3.A.1.2.4) family. The complex is composed of two ATP-binding proteins (XylG), two transmembrane proteins (XylH) and a solute-binding protein (XylF).

The protein resides in the cell inner membrane. The enzyme catalyses D-xylose(out) + ATP + H2O = D-xylose(in) + ADP + phosphate + H(+). Part of the ABC transporter complex XylFGH involved in xylose import. Responsible for energy coupling to the transport system. In Shigella boydii serotype 4 (strain Sb227), this protein is Xylose import ATP-binding protein XylG.